Here is a 97-residue protein sequence, read N- to C-terminus: Co-chaperonin GroES (97 aa).

It belongs to the GroES chaperonin family. In terms of assembly, heptamer of 7 subunits arranged in a ring. Interacts with the chaperonin GroEL.

Its subcellular location is the cytoplasm. In terms of biological role, together with the chaperonin GroEL, plays an essential role in assisting protein folding. The GroEL-GroES system forms a nano-cage that allows encapsulation of the non-native substrate proteins and provides a physical environment optimized to promote and accelerate protein folding. GroES binds to the apical surface of the GroEL ring, thereby capping the opening of the GroEL channel. This Photorhabdus laumondii subsp. laumondii (strain DSM 15139 / CIP 105565 / TT01) (Photorhabdus luminescens subsp. laumondii) protein is Co-chaperonin GroES.